The primary structure comprises 848 residues: Adenylate cyclase (848 aa).

The segment at 1–535 (MYLYIETLKQ…DVSHHFPLRL (535 aa)) is catalytic. The regulatory stretch occupies residues 541-848 (KALYSPCEIR…DTPLLQQYFS (308 aa)). A Phosphohistidine; by CRR modification is found at histidine 609.

It belongs to the adenylyl cyclase class-1 family.

The protein localises to the cytoplasm. It catalyses the reaction ATP = 3',5'-cyclic AMP + diphosphate. The polypeptide is Adenylate cyclase (cyaA) (Escherichia coli O157:H7).